Consider the following 370-residue polypeptide: Putative agmatine deiminase (370 aa).

The segment covering 1–19 (MTNMNVDATQLTTKPSQDG) has biased composition (polar residues). Positions 1–20 (MTNMNVDATQLTTKPSQDGF) are disordered. The active-site Amidino-cysteine intermediate is C361.

Belongs to the agmatine deiminase family.

The enzyme catalyses agmatine + H2O = N-carbamoylputrescine + NH4(+). The polypeptide is Putative agmatine deiminase (Shewanella frigidimarina (strain NCIMB 400)).